The chain runs to 491 residues: UDP-N-acetylmuramate--L-alanine ligase (491 aa).

Residue 126–132 (GTHGKTT) coordinates ATP.

It belongs to the MurCDEF family.

It localises to the cytoplasm. It catalyses the reaction UDP-N-acetyl-alpha-D-muramate + L-alanine + ATP = UDP-N-acetyl-alpha-D-muramoyl-L-alanine + ADP + phosphate + H(+). It participates in cell wall biogenesis; peptidoglycan biosynthesis. Its function is as follows. Cell wall formation. The polypeptide is UDP-N-acetylmuramate--L-alanine ligase (Salmonella typhimurium (strain LT2 / SGSC1412 / ATCC 700720)).